Here is a 389-residue protein sequence, read N- to C-terminus: tRNA pseudouridine synthase Pus10 (389 aa).

Residue Asp213 is the Nucleophile of the active site. Residues Tyr278 and Tyr350 each coordinate substrate.

It belongs to the pseudouridine synthase Pus10 family.

It catalyses the reaction uridine(54) in tRNA = pseudouridine(54) in tRNA. It carries out the reaction uridine(55) in tRNA = pseudouridine(55) in tRNA. Functionally, responsible for synthesis of pseudouridine from uracil-54 and uracil-55 in the psi GC loop of transfer RNAs. The chain is tRNA pseudouridine synthase Pus10 from Thermoplasma acidophilum (strain ATCC 25905 / DSM 1728 / JCM 9062 / NBRC 15155 / AMRC-C165).